The sequence spans 563 residues: NAD(P)H-quinone oxidoreductase chain 4 (563 aa).

15 consecutive transmembrane segments (helical) span residues 25 to 45 (FPWL…VPFI), 56 to 76 (WFAL…YLYG), 90 to 110 (VSWL…ISMP), 111 to 131 (LILL…PVTF), 133 to 153 (PKLF…VFAV), 157 to 177 (LLFF…LAIW), 189 to 209 (FIIY…AMGF), 230 to 250 (GFQL…LPIV), 264 to 284 (TAPV…YALM), 298 to 318 (FAPL…LTSF), 335 to 355 (MGFV…GAML), 356 to 376 (QMIS…ATYD), 397 to 417 (FALW…SGFV), 438 to 458 (IVIA…LLSM), and 485 to 505 (VYII…PRLM).

It belongs to the complex I subunit 4 family.

The protein localises to the cellular thylakoid membrane. It catalyses the reaction a plastoquinone + NADH + (n+1) H(+)(in) = a plastoquinol + NAD(+) + n H(+)(out). The enzyme catalyses a plastoquinone + NADPH + (n+1) H(+)(in) = a plastoquinol + NADP(+) + n H(+)(out). In terms of biological role, NDH-1 shuttles electrons from NAD(P)H, via FMN and iron-sulfur (Fe-S) centers, to quinones in the respiratory chain. The immediate electron acceptor for the enzyme in this species is believed to be plastoquinone. Couples the redox reaction to proton translocation (for every two electrons transferred, four hydrogen ions are translocated across the cytoplasmic membrane), and thus conserves the redox energy in a proton gradient. This Prochlorococcus marinus (strain MIT 9303) protein is NAD(P)H-quinone oxidoreductase chain 4.